A 292-amino-acid polypeptide reads, in one-letter code: Protease HtpX (292 aa).

2 helical membrane-spanning segments follow: residues 5–25 (VVLF…VMSV) and 34–54 (SGLL…SLLL). Residue histidine 140 coordinates Zn(2+). Residue glutamate 141 is part of the active site. Histidine 144 contributes to the Zn(2+) binding site. Transmembrane regions (helical) follow at residues 155–175 (LLQG…GGII) and 193–213 (IIVF…AMWF). Glutamate 218 serves as a coordination point for Zn(2+).

Belongs to the peptidase M48B family. It depends on Zn(2+) as a cofactor.

It localises to the cell inner membrane. This Xanthomonas campestris pv. campestris (strain B100) protein is Protease HtpX.